A 1258-amino-acid polypeptide reads, in one-letter code: Serine/threonine-protein kinase Nek1 (1258 aa).

The region spanning 4-258 (YVRLQKIGEG…VNSILEKGFI (255 aa)) is the Protein kinase domain. Residues 10–18 (IGEGSFGKA) and lysine 33 contribute to the ATP site. Catalysis depends on aspartate 128, which acts as the Proton acceptor. Threonine 156 carries the phosphothreonine modification. Threonine 162 bears the Phosphothreonine; by autocatalysis mark. Residues 330–360 (HEKKPLQKHKQAHQTPEKRVNTGEERRKISE) form a disordered region. The span at 344-360 (TPEKRVNTGEERRKISE) shows a compositional bias: basic and acidic residues. Residues serine 414, serine 418, serine 428, and serine 438 each carry the phosphoserine modification. Disordered stretches follow at residues 578 to 600 (KLRG…EADM), 648 to 669 (KSSD…SKQQ), and 685 to 704 (VDSS…KTNN). Residues 579 to 591 (LRGEKKEANHSEG) show a composition bias toward basic and acidic residues. Serine 653 is modified (phosphoserine). Threonine 661 is modified (phosphothreonine). At serine 664 the chain carries Phosphoserine. Positions 691–700 (DTRETSEEMQ) are enriched in basic and acidic residues. Serine 798, serine 834, serine 868, serine 881, serine 1052, and serine 1126 each carry phosphoserine. A disordered region spans residues 1118–1171 (REQPGEEYSEEEESVLKNSDVEPTANGTDVADEDDNPSSESALNEEWHSDNSDG).

It belongs to the protein kinase superfamily. NEK Ser/Thr protein kinase family. NIMA subfamily. Binds to CBY2. Found in a complex with CFAP410, NEK1 and SPATA7. Interacts with CFAP410. Interacts (via Ser-1052 phosphorylated form) with 14-3-3 proteins. It depends on Mg(2+) as a cofactor. In terms of tissue distribution, high fetal expression in the brain and kidney.

The protein localises to the nucleus. It is found in the cytoplasm. The protein resides in the cytoskeleton. It localises to the microtubule organizing center. Its subcellular location is the centrosome. The enzyme catalyses L-seryl-[protein] + ATP = O-phospho-L-seryl-[protein] + ADP + H(+). It carries out the reaction L-threonyl-[protein] + ATP = O-phospho-L-threonyl-[protein] + ADP + H(+). Functionally, phosphorylates serines and threonines, but also appears to possess tyrosine kinase activity. Involved in DNA damage checkpoint control and for proper DNA damage repair. In response to injury that includes DNA damage, NEK1 phosphorylates VDAC1 to limit mitochondrial cell death. May be implicated in the control of meiosis. Involved in cilium assembly. This is Serine/threonine-protein kinase Nek1 (NEK1) from Homo sapiens (Human).